Consider the following 320-residue polypeptide: N-acetylneuraminate lyase (320 aa).

Threonine 51 and threonine 52 together coordinate aceneuramate. The active-site Proton donor is tyrosine 143. The Schiff-base intermediate with substrate role is filled by lysine 173. Positions 175, 199, 201, 202, and 218 each coordinate aceneuramate. Serine 308 carries the post-translational modification Phosphoserine.

It belongs to the DapA family. NanA subfamily. As to quaternary structure, homotetramer.

Its subcellular location is the cytoplasm. The catalysed reaction is aceneuramate = aldehydo-N-acetyl-D-mannosamine + pyruvate. The protein operates within amino-sugar metabolism; N-acetylneuraminate degradation. In terms of biological role, catalyzes the cleavage of N-acetylneuraminic acid (sialic acid) to form pyruvate and N-acetylmannosamine via a Schiff base intermediate. It prevents sialic acids from being recycled and returning to the cell surface. Involved in the N-glycolylneuraminic acid (Neu5Gc) degradation pathway. This Mus musculus (Mouse) protein is N-acetylneuraminate lyase.